The chain runs to 304 residues: Coenzyme PQQ synthesis protein B (304 aa).

This sequence belongs to the PqqB family.

It participates in cofactor biosynthesis; pyrroloquinoline quinone biosynthesis. Its function is as follows. May be involved in the transport of PQQ or its precursor to the periplasm. This Gluconobacter oxydans (strain 621H) (Gluconobacter suboxydans) protein is Coenzyme PQQ synthesis protein B.